Reading from the N-terminus, the 460-residue chain is Proline--tRNA ligase (460 aa).

This sequence belongs to the class-II aminoacyl-tRNA synthetase family. ProS type 3 subfamily. Homodimer.

It is found in the cytoplasm. The catalysed reaction is tRNA(Pro) + L-proline + ATP = L-prolyl-tRNA(Pro) + AMP + diphosphate. Its function is as follows. Catalyzes the attachment of proline to tRNA(Pro) in a two-step reaction: proline is first activated by ATP to form Pro-AMP and then transferred to the acceptor end of tRNA(Pro). The polypeptide is Proline--tRNA ligase (Methanococcus maripaludis (strain C6 / ATCC BAA-1332)).